We begin with the raw amino-acid sequence, 479 residues long: RHO1 GEF localizing protein 1 (479 aa).

The segment at 460–479 (SQKDPSRTDPSKLRRVPVIQ) is disordered.

Regulator of RHO1 signaling that acts as a cofactor required for the efficient localization of the TUS1 GTP exchange factor (GEF) for RHO1 to the bud neck during all phases of cytokinesis. RHO1 is a key, essential hub protein in the cell wall integrity (CWI) pathway in which activated RHO1-GTP binds directly to and activates multiple different downstream effectors required for cell wall synthesis and actin assembly during cytokinesis. The protein is RHO1 GEF localizing protein 1 of Saccharomyces cerevisiae (strain ATCC 204508 / S288c) (Baker's yeast).